We begin with the raw amino-acid sequence, 158 residues long: Ethylene-responsive transcription factor ERF120 (158 aa).

A DNA-binding region (AP2/ERF) is located at residues 86 to 147 (KHKGVRKKPS…SARRGTKNGE (62 aa)). The interval 134 to 158 (VGRRSARRGTKNGEEASTKKTTEKN) is disordered. Over residues 144-158 (KNGEEASTKKTTEKN) the composition is skewed to basic and acidic residues.

This sequence belongs to the AP2/ERF transcription factor family. ERF subfamily.

It localises to the nucleus. Functionally, probably acts as a transcriptional activator. Binds to the GCC-box pathogenesis-related promoter element. May be involved in the regulation of gene expression by stress factors and by components of stress signal transduction pathways. The sequence is that of Ethylene-responsive transcription factor ERF120 (ERF120) from Arabidopsis thaliana (Mouse-ear cress).